The following is a 369-amino-acid chain: WAT1-related protein At3g53210 (369 aa).

Helical transmembrane passes span 12-31, 39-59, 72-92, 103-123, 133-153, 182-202, 214-234, 252-272, 278-298, and 303-323; these read IAMV…MRYA, LVFP…SAYF, FLIQ…GFYI, ASAT…LLGI, GIAK…ITLY, WTLG…WIVL, FSFV…ISAY, ALLY…IYVV, LFVS…ATLA, and FYLG…LVVM. EamA domains are found at residues 24–150 and 194–323; these read NHVI…SLVI and LCWS…LVVM. The tract at residues 348–369 is disordered; it reads GDEEDYHNNKPRSPISQPLISS.

This sequence belongs to the drug/metabolite transporter (DMT) superfamily. Plant drug/metabolite exporter (P-DME) (TC 2.A.7.4) family.

It localises to the membrane. The sequence is that of WAT1-related protein At3g53210 from Arabidopsis thaliana (Mouse-ear cress).